A 462-amino-acid polypeptide reads, in one-letter code: Beta-glucosidase 1A (462 aa).

The substrate site is built by Gln-20, His-123, and Asn-169. Glu-170 (proton donor) is an active-site residue. Tyr-301 is a substrate binding site. The active-site Nucleophile is the Glu-365. Substrate-binding positions include Trp-415 and 422 to 423 (EW).

Belongs to the glycosyl hydrolase 1 family.

It catalyses the reaction Hydrolysis of terminal, non-reducing beta-D-glucosyl residues with release of beta-D-glucose.. Its function is as follows. Plays an important role in cellulose degradation. Shows hydrolytic activity against several glycosidic compounds. The polypeptide is Beta-glucosidase 1A (Phanerodontia chrysosporium (White-rot fungus)).